We begin with the raw amino-acid sequence, 353 residues long: MEHTHAHLAANSSLSWWSPGSACGLGFVPVVYYSLLLCLGLPANILTVIILSQLVARRQKSSYNYLLALAAADILVLFFIVFVDFLLEDFILNMQMPQVPDKIIEVLEFSSIHTSIWITVPLTIDRYIAVCHPLKYHTVSYPARTRKVIVSVYITCFLTSIPYYWWPNIWTEDYISTSVHHVLIWIHCFTVYLVPCSIFFILNSIIVYKLRRKSNFRLRGYSTGKTTAILFTITSIFATLWAPRIIMILYHLYGAPIQNRWLVHIMSDIANMLALLNTAINFFLYCFISKRFRTMAAATLKAFFKCQKQPVQFYTNHNFSITSSPWISPANSHCIKMLVYQYDKNGKPIKVSP.

The Extracellular segment spans residues 1-29; that stretch reads MEHTHAHLAANSSLSWWSPGSACGLGFVP. Residue N11 is glycosylated (N-linked (GlcNAc...) asparagine). The helical transmembrane segment at 30 to 50 threads the bilayer; the sequence is VVYYSLLLCLGLPANILTVII. The Cytoplasmic segment spans residues 51–65; the sequence is LSQLVARRQKSSYNY. The chain crosses the membrane as a helical span at residues 66-86; that stretch reads LLALAAADILVLFFIVFVDFL. Residues 87–102 are Extracellular-facing; that stretch reads LEDFILNMQMPQVPDK. Residues 103-123 form a helical membrane-spanning segment; sequence IIEVLEFSSIHTSIWITVPLT. At 124–148 the chain is on the cytoplasmic side; the sequence is IDRYIAVCHPLKYHTVSYPARTRKV. A helical membrane pass occupies residues 149 to 169; sequence IVSVYITCFLTSIPYYWWPNI. Residues 170 to 181 lie on the Extracellular side of the membrane; it reads WTEDYISTSVHH. A helical membrane pass occupies residues 182-202; that stretch reads VLIWIHCFTVYLVPCSIFFIL. Topologically, residues 203–228 are cytoplasmic; sequence NSIIVYKLRRKSNFRLRGYSTGKTTA. A helical transmembrane segment spans residues 229–249; sequence ILFTITSIFATLWAPRIIMIL. The Extracellular segment spans residues 250–268; it reads YHLYGAPIQNRWLVHIMSD. A helical membrane pass occupies residues 269–289; it reads IANMLALLNTAINFFLYCFIS. Over 290-353 the chain is Cytoplasmic; it reads KRFRTMAAAT…KNGKPIKVSP (64 aa).

The protein belongs to the G-protein coupled receptor 1 family. Expressed almost exclusively in the brain. Detected at very low levels in the peripheral tissues.

The protein localises to the cell membrane. Its function is as follows. Orphan receptor. Seems to act through a G(q/11)-mediated pathway. This chain is Probable G-protein coupled receptor 139 (GPR139), found in Homo sapiens (Human).